A 342-amino-acid polypeptide reads, in one-letter code: Glycerol-1-phosphate dehydrogenase [NAD(P)+] (342 aa).

NAD(+)-binding positions include 84 to 88 (GRPID) and 106 to 109 (TAAS). Substrate is bound at residue D111. Residue S115 coordinates NAD(+). D160 lines the substrate pocket. D160 and H241 together coordinate Zn(2+). Position 245 (H245) interacts with substrate. A Zn(2+)-binding site is contributed by H260.

It belongs to the glycerol-1-phosphate dehydrogenase family. Homodimer. Requires Zn(2+) as cofactor.

The protein localises to the cytoplasm. It catalyses the reaction sn-glycerol 1-phosphate + NAD(+) = dihydroxyacetone phosphate + NADH + H(+). The enzyme catalyses sn-glycerol 1-phosphate + NADP(+) = dihydroxyacetone phosphate + NADPH + H(+). It participates in membrane lipid metabolism; glycerophospholipid metabolism. Functionally, catalyzes the NAD(P)H-dependent reduction of dihydroxyacetonephosphate (DHAP or glycerone phosphate) to glycerol 1-phosphate (G1P). The G1P thus generated is used as the glycerophosphate backbone of phospholipids in the cellular membranes of Archaea. The sequence is that of Glycerol-1-phosphate dehydrogenase [NAD(P)+] from Pyrobaculum aerophilum (strain ATCC 51768 / DSM 7523 / JCM 9630 / CIP 104966 / NBRC 100827 / IM2).